The primary structure comprises 361 residues: Aurora kinase B-A (361 aa).

The Protein kinase domain occupies 93–343 (FDIGRPLGKG…LKGVMEHPWV (251 aa)). ATP contacts are provided by residues 99-107 (LGKGKFGNV) and Lys122. The active-site Proton acceptor is the Asp216.

It belongs to the protein kinase superfamily. Ser/Thr protein kinase family. Aurora subfamily. As to quaternary structure, component of the CPC at least composed of survivin/birc5, incenp, cdca8/borealin and/or cdca9/dasra-A, and aurkb/aurora-B. Interacts directly (via N-terminus and kinase domain) with incenp (via C terminus), and may weakly interact (via N-terminus) with birc5.1 to stabilize the complex. Interacts with mtus1. The cofactor is Mg(2+). Phosphorylated, stimulates kinase activity.

The protein localises to the nucleus. It localises to the chromosome. The enzyme catalyses L-seryl-[protein] + ATP = O-phospho-L-seryl-[protein] + ADP + H(+). It catalyses the reaction L-threonyl-[protein] + ATP = O-phospho-L-threonyl-[protein] + ADP + H(+). Kinase activity is stimulated by both birc5/survivin-binding and cell-cycle specific phosphorylation. In terms of biological role, serine/threonine-protein kinase component of the chromosomal passenger complex (CPC), a complex that acts as a key regulator of mitosis. The CPC complex has essential functions at the centromere in ensuring correct chromosome alignment and segregation and is required for chromatin-induced microtubule stabilization and spindle assembly. Involved in the bipolar attachment of spindle microtubules to kinetochores and is a key regulator for the onset of cytokinesis during mitosis. Required for central/midzone spindle assembly and cleavage furrow formation. Key component of the cytokinesis checkpoint, a process required to delay abscission to prevent both premature resolution of intercellular chromosome bridges and accumulation of DNA damage. Phosphorylates 'Ser-10' of histone H3 during mitosis. This chain is Aurora kinase B-A (aurkb-a), found in Xenopus laevis (African clawed frog).